A 366-amino-acid polypeptide reads, in one-letter code: UDP-N-acetylenolpyruvoylglucosamine reductase (366 aa).

The 175-residue stretch at 29 to 203 folds into the FAD-binding PCMH-type domain; sequence VGPVARTLVT…LEVEFALDAS (175 aa). The active site involves Arg177. The Proton donor role is filled by Ser258. Glu358 is an active-site residue.

This sequence belongs to the MurB family. The cofactor is FAD.

The protein resides in the cytoplasm. It carries out the reaction UDP-N-acetyl-alpha-D-muramate + NADP(+) = UDP-N-acetyl-3-O-(1-carboxyvinyl)-alpha-D-glucosamine + NADPH + H(+). It functions in the pathway cell wall biogenesis; peptidoglycan biosynthesis. Functionally, cell wall formation. The sequence is that of UDP-N-acetylenolpyruvoylglucosamine reductase from Mycobacterium marinum (strain ATCC BAA-535 / M).